The sequence spans 175 residues: ATP synthase subunit b, chloroplastic (175 aa).

The helical transmembrane segment at Val-24–Leu-46 threads the bilayer.

The protein belongs to the ATPase B chain family. In terms of assembly, F-type ATPases have 2 components, F(1) - the catalytic core - and F(0) - the membrane proton channel. F(1) has five subunits: alpha(3), beta(3), gamma(1), delta(1), epsilon(1). F(0) has four main subunits: a(1), b(1), b'(1) and c(10-14). The alpha and beta chains form an alternating ring which encloses part of the gamma chain. F(1) is attached to F(0) by a central stalk formed by the gamma and epsilon chains, while a peripheral stalk is formed by the delta, b and b' chains.

It localises to the plastid. The protein resides in the chloroplast thylakoid membrane. Functionally, f(1)F(0) ATP synthase produces ATP from ADP in the presence of a proton or sodium gradient. F-type ATPases consist of two structural domains, F(1) containing the extramembraneous catalytic core and F(0) containing the membrane proton channel, linked together by a central stalk and a peripheral stalk. During catalysis, ATP synthesis in the catalytic domain of F(1) is coupled via a rotary mechanism of the central stalk subunits to proton translocation. Component of the F(0) channel, it forms part of the peripheral stalk, linking F(1) to F(0). This is ATP synthase subunit b, chloroplastic from Chlorella vulgaris (Green alga).